Here is a 416-residue protein sequence, read N- to C-terminus: UDP-N-acetylglucosamine 1-carboxyvinyltransferase (416 aa).

22–23 lines the phosphoenolpyruvate pocket; it reads KN. R92 lines the UDP-N-acetyl-alpha-D-glucosamine pocket. C116 acts as the Proton donor in catalysis. A 2-(S-cysteinyl)pyruvic acid O-phosphothioketal modification is found at C116. UDP-N-acetyl-alpha-D-glucosamine is bound by residues D306 and I328.

Belongs to the EPSP synthase family. MurA subfamily.

The protein resides in the cytoplasm. The catalysed reaction is phosphoenolpyruvate + UDP-N-acetyl-alpha-D-glucosamine = UDP-N-acetyl-3-O-(1-carboxyvinyl)-alpha-D-glucosamine + phosphate. It participates in cell wall biogenesis; peptidoglycan biosynthesis. Its function is as follows. Cell wall formation. Adds enolpyruvyl to UDP-N-acetylglucosamine. The protein is UDP-N-acetylglucosamine 1-carboxyvinyltransferase of Buchnera aphidicola subsp. Baizongia pistaciae (strain Bp).